The chain runs to 442 residues: MTKGLKIVTIGGGSSYTPELVEGFIKRYDELPVRELWLVDIPEGEEKLNIVGTLAKRMVEKAGVPIDIHLTLDRRKALKDADFVTTQFRVGLLQARAKDERIPLKYGVIGQETNGPGGLFKGLRTIPVILEIAKDIEELCPNAWLVNFTNPAGMVTEALLRYSNLKKVVGLCNVPIGIKMGVAKALDVDVDRVEVQFAGLNHMVFGLDVFLDGVSVKEQVIEAMGDPKNAMTMKNISGAEWEPDFLKALNVIPCGYHRYYFKTKEMLEHELEASQTEGTRAEVVQKVEKELFELYKDPNLAIKPPQLEKRGGAYYSDAACNLISSIYNDKHDIQPVNTINNGAIASIPDDSAVEVNCVMTKTGPKPIAVGDLPVSVRGLVQQIKSFERVAAEAAVTGDYQTALLAMTINPLVPSDTVAKQILDEMLEAHKAYLPQFFNKIEA.

An NAD(+)-binding site is contributed by 5 to 73 (LKIVTIGGGS…VPIDIHLTLD (69 aa)). Substrate is bound by residues R96 and N150. Mn(2+) is bound by residues C172 and H202. Y256 serves as the catalytic Proton acceptor.

This sequence belongs to the glycosyl hydrolase 4 family. NAD(+) serves as cofactor. Requires a divalent metal cation as cofactor.

It carries out the reaction 6-phospho-beta-D-glucosyl-(1-&gt;4)-D-glucose + H2O = D-glucose 6-phosphate + D-glucose. Hydrolyzes phospho-beta-glucosides. In Bacillus subtilis (strain 168), this protein is Probable 6-phospho-beta-glucosidase (licH).